The primary structure comprises 97 residues: Small ribosomal subunit protein eS25 (97 aa).

The tract at residues 1–24 (MAPAASGAKKQKKKWSKGKVKDKA) is disordered. Residues 9 to 18 (KKQKKKWSKG) are compositionally biased toward basic residues.

It belongs to the eukaryotic ribosomal protein eS25 family. In terms of assembly, component of the small ribosomal subunit (SSU). Mature N.crassa ribosomes consist of a small (40S) and a large (60S) subunit. The 40S small subunit contains 1 molecule of ribosomal RNA (18S rRNA) and at least 32 different proteins. The large 60S subunit contains 3 rRNA molecules (26S, 5.8S and 5S rRNA) and at least 42 different proteins.

It is found in the cytoplasm. Its function is as follows. Component of the ribosome, a large ribonucleoprotein complex responsible for the synthesis of proteins in the cell. The small ribosomal subunit (SSU) binds messenger RNAs (mRNAs) and translates the encoded message by selecting cognate aminoacyl-transfer RNA (tRNA) molecules. The large subunit (LSU) contains the ribosomal catalytic site termed the peptidyl transferase center (PTC), which catalyzes the formation of peptide bonds, thereby polymerizing the amino acids delivered by tRNAs into a polypeptide chain. The nascent polypeptides leave the ribosome through a tunnel in the LSU and interact with protein factors that function in enzymatic processing, targeting, and the membrane insertion of nascent chains at the exit of the ribosomal tunnel. In Neurospora crassa (strain ATCC 24698 / 74-OR23-1A / CBS 708.71 / DSM 1257 / FGSC 987), this protein is Small ribosomal subunit protein eS25 (rps-25).